Reading from the N-terminus, the 463-residue chain is Abscisic acid 8'-hydroxylase 3 (463 aa).

Residues 6–26 (LFLTLSAAALFLCLLRFIAGV) form a helical membrane-spanning segment. A heme-binding site is contributed by Cys-411.

The protein belongs to the cytochrome P450 family. Heme serves as cofactor. As to expression, mainly expressed in flower buds, flowers, rosette leaves and roots. Lower expression in mature siliques and inflorescence stems. Not expressed in dry seeds.

It localises to the membrane. The catalysed reaction is 2-cis-(+)-abscisate + reduced [NADPH--hemoprotein reductase] + O2 = (+)-8'-hydroxyabscisate + oxidized [NADPH--hemoprotein reductase] + H2O + H(+). It functions in the pathway plant hormone degradation; abscisic acid degradation. Its activity is regulated as follows. Inhibited by tetcyclcis, but not by metyrapone. Its function is as follows. Involved in the oxidative degradation of abscisic acid, but not in the isomerization of the produced 8'-hydroxyabscisic acid (8'-OH-ABA) to (-)-phaseic acid (PA). Involved in the control of postgermination growth. This Arabidopsis thaliana (Mouse-ear cress) protein is Abscisic acid 8'-hydroxylase 3 (CYP707A3).